Consider the following 210-residue polypeptide: Molybdenum cofactor guanylyltransferase (210 aa).

GTP contacts are provided by residues leucine 14–glycine 16, lysine 27, asparagine 55, aspartate 73, and aspartate 108. Residue aspartate 108 coordinates Mg(2+).

It belongs to the MobA family. In terms of assembly, monomer. Mg(2+) serves as cofactor.

Its subcellular location is the cytoplasm. It carries out the reaction Mo-molybdopterin + GTP + H(+) = Mo-molybdopterin guanine dinucleotide + diphosphate. Its function is as follows. Transfers a GMP moiety from GTP to Mo-molybdopterin (Mo-MPT) cofactor (Moco or molybdenum cofactor) to form Mo-molybdopterin guanine dinucleotide (Mo-MGD) cofactor. The protein is Molybdenum cofactor guanylyltransferase of Rhodopseudomonas palustris (strain BisB5).